The sequence spans 121 residues: uncharacterized protein (121 aa).

The 69-residue stretch at 9–77 (KPIYLQIADQ…RGQGTFIAEK (69 aa)) folds into the HTH gntR-type domain. The segment at residues 37 to 56 (VREMAIQTKVNPNTIQRTYS) is a DNA-binding region (H-T-H motif).

This is an uncharacterized protein from Bacillus subtilis (strain 168).